A 208-amino-acid polypeptide reads, in one-letter code: Pyridoxine/pyridoxamine 5'-phosphate oxidase (208 aa).

Residues 55–60 (RMVLLK), 70–71 (YT), K77, and Q99 each bind FMN. Substrate is bound at residue K60. Residues Y117, R121, and S125 each contribute to the substrate site. FMN-binding positions include 134–135 (QS) and W180. 186–188 (RIH) contacts substrate. Residue R190 participates in FMN binding.

It belongs to the pyridoxamine 5'-phosphate oxidase family. In terms of assembly, homodimer. Requires FMN as cofactor.

The catalysed reaction is pyridoxamine 5'-phosphate + O2 + H2O = pyridoxal 5'-phosphate + H2O2 + NH4(+). It carries out the reaction pyridoxine 5'-phosphate + O2 = pyridoxal 5'-phosphate + H2O2. Its pathway is cofactor metabolism; pyridoxal 5'-phosphate salvage; pyridoxal 5'-phosphate from pyridoxamine 5'-phosphate: step 1/1. It participates in cofactor metabolism; pyridoxal 5'-phosphate salvage; pyridoxal 5'-phosphate from pyridoxine 5'-phosphate: step 1/1. In terms of biological role, catalyzes the oxidation of either pyridoxine 5'-phosphate (PNP) or pyridoxamine 5'-phosphate (PMP) into pyridoxal 5'-phosphate (PLP). The sequence is that of Pyridoxine/pyridoxamine 5'-phosphate oxidase from Pelagibacter ubique (strain HTCC1062).